Consider the following 220-residue polypeptide: ATP-dependent Clp protease proteolytic subunit 1 (220 aa).

Residue serine 118 is the Nucleophile of the active site. Residue histidine 143 is part of the active site.

This sequence belongs to the peptidase S14 family. As to quaternary structure, fourteen ClpP subunits assemble into 2 heptameric rings which stack back to back to give a disk-like structure with a central cavity, resembling the structure of eukaryotic proteasomes.

It localises to the cytoplasm. The catalysed reaction is Hydrolysis of proteins to small peptides in the presence of ATP and magnesium. alpha-casein is the usual test substrate. In the absence of ATP, only oligopeptides shorter than five residues are hydrolyzed (such as succinyl-Leu-Tyr-|-NHMec, and Leu-Tyr-Leu-|-Tyr-Trp, in which cleavage of the -Tyr-|-Leu- and -Tyr-|-Trp bonds also occurs).. Functionally, cleaves peptides in various proteins in a process that requires ATP hydrolysis. Has a chymotrypsin-like activity. Plays a major role in the degradation of misfolded proteins. This is ATP-dependent Clp protease proteolytic subunit 1 from Rhodococcus jostii (strain RHA1).